A 351-amino-acid polypeptide reads, in one-letter code: tRNA (guanine(26)-N(2))-dimethyltransferase (351 aa).

Positions V4–L350 constitute a Trm1 methyltransferase domain. S-adenosyl-L-methionine contacts are provided by R39, R65, D83, D109, and A110.

This sequence belongs to the class I-like SAM-binding methyltransferase superfamily. Trm1 family.

It catalyses the reaction guanosine(26) in tRNA + 2 S-adenosyl-L-methionine = N(2)-dimethylguanosine(26) in tRNA + 2 S-adenosyl-L-homocysteine + 2 H(+). Its function is as follows. Dimethylates a single guanine residue at position 26 of a number of tRNAs using S-adenosyl-L-methionine as donor of the methyl groups. In Pyrobaculum neutrophilum (strain DSM 2338 / JCM 9278 / NBRC 100436 / V24Sta) (Thermoproteus neutrophilus), this protein is tRNA (guanine(26)-N(2))-dimethyltransferase.